Consider the following 648-residue polypeptide: DNA gyrase subunit B (648 aa).

The Toprim domain maps to 432 to 546 (RELFIVEGNS…YGFVYLAQPP (115 aa)). Mg(2+) contacts are provided by Glu-438, Asp-511, and Asp-513.

The protein belongs to the type II topoisomerase GyrB family. As to quaternary structure, heterotetramer, composed of two GyrA and two GyrB chains. In the heterotetramer, GyrA contains the active site tyrosine that forms a transient covalent intermediate with DNA, while GyrB binds cofactors and catalyzes ATP hydrolysis. Requires Mg(2+) as cofactor. It depends on Mn(2+) as a cofactor. The cofactor is Ca(2+).

The protein localises to the cytoplasm. It carries out the reaction ATP-dependent breakage, passage and rejoining of double-stranded DNA.. Functionally, a type II topoisomerase that negatively supercoils closed circular double-stranded (ds) DNA in an ATP-dependent manner to modulate DNA topology and maintain chromosomes in an underwound state. Negative supercoiling favors strand separation, and DNA replication, transcription, recombination and repair, all of which involve strand separation. Also able to catalyze the interconversion of other topological isomers of dsDNA rings, including catenanes and knotted rings. Type II topoisomerases break and join 2 DNA strands simultaneously in an ATP-dependent manner. This Metamycoplasma hominis (strain ATCC 23114 / DSM 25592 / NBRC 14850 / NCTC 10111 / PG21) (Mycoplasma hominis) protein is DNA gyrase subunit B.